The chain runs to 152 residues: MTTQIELKILDARIGTEYPLPAYATPGSAGMDLRALLDAPLTLAPGDTTLVPTGLAIHIQDPGLCATILPRSGLGHKHGIVLGNLVGLIDSDYQGQLMVSVWNRGNDNFTMQPGERIAQLVIMPVVQASFQLVDEFNQSERGEGGFGSSGRQ.

Substrate is bound by residues 71 to 73, N84, 88 to 90, and M98; these read RSG and LID.

This sequence belongs to the dUTPase family. Mg(2+) is required as a cofactor.

It carries out the reaction dUTP + H2O = dUMP + diphosphate + H(+). Its pathway is pyrimidine metabolism; dUMP biosynthesis; dUMP from dCTP (dUTP route): step 2/2. Its function is as follows. This enzyme is involved in nucleotide metabolism: it produces dUMP, the immediate precursor of thymidine nucleotides and it decreases the intracellular concentration of dUTP so that uracil cannot be incorporated into DNA. The protein is Deoxyuridine 5'-triphosphate nucleotidohydrolase of Aeromonas hydrophila subsp. hydrophila (strain ATCC 7966 / DSM 30187 / BCRC 13018 / CCUG 14551 / JCM 1027 / KCTC 2358 / NCIMB 9240 / NCTC 8049).